A 213-amino-acid chain; its full sequence is Redox-sensing transcriptional repressor Rex (213 aa).

The segment at residues 18–57 is a DNA-binding region (H-T-H motif); sequence LYYRIFKRFHAEKIERANSKQIAEAIGIDSATVRRDFSYF. 92-97 serves as a coordination point for NAD(+); sequence GIGNMG.

The protein belongs to the transcriptional regulatory Rex family. As to quaternary structure, homodimer.

It is found in the cytoplasm. Functionally, modulates transcription in response to changes in cellular NADH/NAD(+) redox state. Binds to the promoter of the aldehyde-alcohol dehydrogenase adhE gene. Functions as a redox-dependent repressor of adhE expression. In Streptococcus pneumoniae serotype 19F (strain G54), this protein is Redox-sensing transcriptional repressor Rex.